The sequence spans 863 residues: DNA-directed RNA polymerase subunit beta' (863 aa).

Residues 1 to 83 form a disordered region; the sequence is MSGEVAQDQP…SKKKETKASQ (83 aa). Positions 23–36 are enriched in polar residues; the sequence is EIVNSAITVQSSAK. Residues Cys159, Cys161, Cys180, and Cys183 each contribute to the Zn(2+) site. Mg(2+) contacts are provided by Asp621, Asp623, and Asp625.

Belongs to the RNA polymerase beta' chain family. RpoC1 subfamily. In plastids the minimal PEP RNA polymerase catalytic core is composed of four subunits: alpha, beta, beta', and beta''. When a (nuclear-encoded) sigma factor is associated with the core the holoenzyme is formed, which can initiate transcription. Mg(2+) serves as cofactor. The cofactor is Zn(2+).

Its subcellular location is the plastid. The protein resides in the chloroplast. It carries out the reaction RNA(n) + a ribonucleoside 5'-triphosphate = RNA(n+1) + diphosphate. Functionally, DNA-dependent RNA polymerase catalyzes the transcription of DNA into RNA using the four ribonucleoside triphosphates as substrates. The sequence is that of DNA-directed RNA polymerase subunit beta' from Nephroselmis olivacea (Green alga).